Consider the following 98-residue polypeptide: uncharacterized protein (98 aa).

This is an uncharacterized protein from Sulfolobus islandicus filamentous virus (isolate Iceland/Hveragerdi) (SIFV).